A 102-amino-acid polypeptide reads, in one-letter code: Small ribosomal subunit protein uS10 (102 aa).

Belongs to the universal ribosomal protein uS10 family. Part of the 30S ribosomal subunit.

Its function is as follows. Involved in the binding of tRNA to the ribosomes. The sequence is that of Small ribosomal subunit protein uS10 from Brevibacillus brevis (strain 47 / JCM 6285 / NBRC 100599).